Reading from the N-terminus, the 161-residue chain is Early E3 17.7 kDa glycoprotein (161 aa).

Residues asparagine 14 and asparagine 87 are each glycosylated (N-linked (GlcNAc...) asparagine; by host). The chain crosses the membrane as a helical span at residues 102-129 (IINPAIFLFLHVLTLVIVLAMAAEVIYN).

It localises to the host membrane. The sequence is that of Early E3 17.7 kDa glycoprotein from Murine adenovirus A serotype 1 (MAdV-1).